The following is a 739-amino-acid chain: Alcohol dehydrogenase (quinone), dehydrogenase subunit (739 aa).

The N-terminal stretch at 1–35 is a signal peptide; that stretch reads MISAVFGKRRSLSRTLTAGTICAALISGYATMASA. Glu-97 is a pyrroloquinoline quinone binding site. Cys-143 and Cys-144 are joined by a disulfide. Arg-149 is a pyrroloquinoline quinone binding site. Glu-217 is a binding site for Ca(2+). Residue Thr-279 participates in pyrroloquinoline quinone binding. Residues Asn-299 and Asp-344 each coordinate Ca(2+). Asp-344 functions as the Proton acceptor in the catalytic mechanism. Pyrroloquinoline quinone contacts are provided by Lys-371 and Ile-585. One can recognise a Cytochrome c domain in the interval 635-739; sequence FDSKRTDNGY…NADGIPEQLP (105 aa). Positions 651, 654, 655, and 694 each coordinate heme c.

This sequence belongs to the bacterial PQQ dehydrogenase family. As to quaternary structure, the alcohol dehydrogenase multicomponent enzyme system is composed of a dehydrogenase subunit I (AdhA) and a cytochrome c subunit II (AdhB). Pyrroloquinoline quinone is required as a cofactor. Requires Ca(2+) as cofactor. The cofactor is heme c.

It is found in the cell membrane. The enzyme catalyses ethanol + a ubiquinone = a ubiquinol + acetaldehyde. In terms of biological role, dehydrogenase component of the alcohol dehydrogenase multicomponent enzyme system which is involved in the production of acetic acid and in the ethanol oxidase respiratory chain. Quinohemoprotein alcohol dehydrogenase (ADH) catalyzes the oxidation of ethanol to acetaldehyde by transferring electrons to the ubiquinone embedded in the membrane phospholipids. The electrons transfer from ethanol to membranous ubiquinone occurs from pyrroloquinoline quinone (PQQ) to one heme c in subunit I (AdhA), and finally to two heme c in subunit II (AdhB). Besides ubiquinone reduction, ADH also has a ubiquinol (QH2) oxidation reaction which mediates electron transfer from ubiquinol to the non-energy generating bypass oxidase system. The electrons transfer occurs from ubiquinol (QH2) to the additional heme c within subunit II (AdhB). The sequence is that of Alcohol dehydrogenase (quinone), dehydrogenase subunit from Komagataeibacter europaeus (Gluconacetobacter europaeus).